A 149-amino-acid chain; its full sequence is Large ribosomal subunit protein bL9 (149 aa).

The protein belongs to the bacterial ribosomal protein bL9 family.

Its function is as follows. Binds to the 23S rRNA. In Helicobacter pylori (strain HPAG1), this protein is Large ribosomal subunit protein bL9.